The chain runs to 237 residues: UPF0053 inner membrane protein YgdQ (237 aa).

Topologically, residues 1-17 are periplasmic; it reads MLFAWITDPNAWLALGT. The chain crosses the membrane as a helical span at residues 18-38; that stretch reads LTLLEIVLGIDNIIFLSLVVA. Residues 39 to 50 are Cytoplasmic-facing; the sequence is KLPTAQRAHARR. A helical transmembrane segment spans residues 51–71; sequence LGLAGAMVMRLALLASIAWVT. At 72-79 the chain is on the periplasmic side; it reads RLTNPLFT. The chain crosses the membrane as a helical span at residues 80–100; sequence IFSQEISARDLILLLGGLFLI. Topologically, residues 101–124 are cytoplasmic; sequence WKASKEIHESIEGEEEGLKTRVSS. Residues 125–145 traverse the membrane as a helical segment; it reads FLGAIVQIMLLDIIFSLDSVI. The Periplasmic segment spans residues 146–151; sequence TAVGLS. The chain crosses the membrane as a helical span at residues 152–172; it reads DHLFIMMAAVVIAVGVMMFAA. The Cytoplasmic segment spans residues 173 to 186; it reads RSIGDFVERHPSVK. The helical transmembrane segment at 187 to 207 threads the bilayer; it reads MLALSFLILVGFTLILESFDI. Over 208-209 the chain is Periplasmic; the sequence is HV. A helical membrane pass occupies residues 210–230; sequence PKGYIYFAMFFSIAVESLNLI. Residues 231-237 are Cytoplasmic-facing; that stretch reads RNKKNPL.

It belongs to the UPF0053 family.

The protein resides in the cell inner membrane. This chain is UPF0053 inner membrane protein YgdQ (ygdQ), found in Escherichia coli O157:H7.